The following is a 671-amino-acid chain: Probable potassium transport system protein Kup 2 (671 aa).

Helical transmembrane passes span 18-38 (GFLI…LYAM), 60-80 (VSLV…LIAL), 103-123 (WLIV…ALTP), 149-169 (VTTL…ASLV), 173-193 (FGPI…INSF), 218-238 (AGFF…ALYS), 252-272 (WPFV…WLLA), 292-312 (MVIY…QALI), 343-363 (LYIP…VLYF), 373-393 (YSLA…YFLI), 402-422 (IAFI…ASLV), and 424-444 (FING…VMFI).

This sequence belongs to the HAK/KUP transporter (TC 2.A.72) family.

Its subcellular location is the cell membrane. The enzyme catalyses K(+)(in) + H(+)(in) = K(+)(out) + H(+)(out). In terms of biological role, transport of potassium into the cell. Likely operates as a K(+):H(+) symporter. The protein is Probable potassium transport system protein Kup 2 of Lactococcus lactis subsp. cremoris (strain MG1363).